The primary structure comprises 800 residues: MSEIIQDLSLEDVLGDRFGRYSKYIIQERALPDVRDGLKPVQRRILYAMYSSGNTHDKNFRKSAKTVGDVIGQYHPHGDSSVYEAMVRLSQDWKLRHVLIEMHGNNGSIDNDPPAAMRYTEAKLSLLAEELLRDINKETVSFIPNYDDTTLEPMVLPSRFPNLLVNGSTGISAGYATDIPPHNLAEVIQATLKYIDNPDITVNQLMKYIKGPDFPTGGIIQGIDGIKKAYESGKGRIIVRSKVEEETLRNGRKQLIITEIPYEVNKSSLVKRIDELRADKKVDGIVEVRDETDRTGLRIAIELKKDVNSESIKNYLYKNSDLQISYNFNMVAISDGRPKLMGIRQIIDSYLNHQIEVVANRTKFELDNAEKRMHIVEGLIKALSILDKVIELIRSSKNKCDAKENLIEVYEFTEEQAEAIVMLQLYRLTNTDIVALEGEHKELEALIKQLRHILDNHDALLNVIKEELNEIKKKFKSERLSLIEAEIEEIKIDKEVMVPSEEVILSMTRHGYIKRTSIRSFNASGVEDIGLKDGDSLLKHQEVNTQDTVLVFTNKGRYLFIPVHKLADIRWKELGQHVSQIVPIEEDEVVINVFNEKDFNTDAFYVFATQNGMIKKSTVPLFKTTRFNKPLIATKVKENDDLISVMRFEKDQLITVITNKGMSLTYNTSELSDTGLRAAGVKSINLKAEDFVVMTEGVSENDTILMATQRGSLKRISFKILQVAKRAQRGITLLKELKKNPHRIVAAHVVTGEHSQYTLYSKSNEEHGLINDIHKSEQYTNGSFIVDTDDFGEVIDMYIS.

Positions 31-495 (LPDVRDGLKP…EIEEIKIDKE (465 aa)) constitute a Topo IIA-type catalytic domain. Residue tyrosine 119 is the O-(5'-phospho-DNA)-tyrosine intermediate of the active site.

It belongs to the type II topoisomerase GyrA/ParC subunit family. ParC type 2 subfamily. Heterotetramer composed of ParC and ParE.

The protein localises to the cell membrane. It carries out the reaction ATP-dependent breakage, passage and rejoining of double-stranded DNA.. In terms of biological role, topoisomerase IV is essential for chromosome segregation. It relaxes supercoiled DNA. Performs the decatenation events required during the replication of a circular DNA molecule. The chain is DNA topoisomerase 4 subunit A from Staphylococcus aureus (strain MW2).